The following is a 91-amino-acid chain: Potassium channel toxin Meg-beta-KTx1 (91 aa).

The signal sequence occupies residues Met1–Cys19. The propeptide occupies Gly20 to Gln27. A BetaSPN-type CS-alpha/beta domain is found at Gln54–Phe91. 3 cysteine pairs are disulfide-bonded: Cys57–Cys78, Cys64–Cys83, and Cys68–Cys85.

This sequence belongs to the long chain scorpion toxin family. Class 1 subfamily. As to expression, expressed by the venom gland.

It localises to the secreted. Functionally, inhibits voltage-gated potassium channel. This is Potassium channel toxin Meg-beta-KTx1 from Mesobuthus gibbosus (Mediterranean checkered scorpion).